We begin with the raw amino-acid sequence, 156 residues long: Arginine repressor (156 aa).

The protein belongs to the ArgR family.

Its subcellular location is the cytoplasm. It participates in amino-acid biosynthesis; L-arginine biosynthesis [regulation]. Regulates arginine biosynthesis genes. This chain is Arginine repressor, found in Aliivibrio fischeri (strain ATCC 700601 / ES114) (Vibrio fischeri).